A 287-amino-acid chain; its full sequence is Survival motor neuron protein (287 aa).

The disordered stretch occupies residues 1 to 27; it reads MGGGGGLPEPEDSVLFRRGTGQSDDSD. A P1 (binding site for GEMIN2) region spans residues 8–39; the sequence is PEPEDSVLFRRGTGQSDDSDIWDDTALIKAYD. Threonine 20 bears the Phosphothreonine mark. Phosphoserine is present on residues serine 23 and serine 26. Residue lysine 46 forms a Glycyl lysine isopeptide (Lys-Gly) (interchain with G-Cter in SUMO2) linkage. Residues 52 to 83 are disordered; sequence GDISEASDKPKSTPKRKPAKKNKSQKKNATTA. Over residues 63-77 the composition is skewed to basic residues; it reads STPKRKPAKKNKSQK. Threonine 64 bears the Phosphothreonine mark. A Tudor domain is found at 86 to 146; sequence QWKVGDKCSA…LSPACEVANN (61 aa). The segment at 92 to 205 is required for interaction with RPP20/POP7; the sequence is KCSAVWSEDG…MSGSGLGPGK (114 aa). Residues 148-216 form a disordered region; sequence EQDTQENENE…GVKFSGPPPP (69 aa). Positions 157 to 180 are enriched in polar residues; the sequence is ESQISTDESENSSRSPGNKPNNIK. Lysine 205 participates in a covalent cross-link: Glycyl lysine isopeptide (Lys-Gly) (interchain with G-Cter in SUMO2). The tract at residues 234–261 is P2 (binding site for SM B); the sequence is PPIIPPPPPICPDSLDDADALGSMLISW. The interval 273-287 is required for interaction with SYNCRIP; it reads GFKQNQKEGRCSHFN.

It belongs to the SMN family. As to quaternary structure, homooligomer; may form higher order homooligomers in the dimer to octamer range. Part of the core SMN complex that contains SMN1, GEMIN2/SIP1, DDX20/GEMIN3, GEMIN4, GEMIN5, GEMIN6, GEMIN7, GEMIN8 and STRAP/UNRIP. Part of the SMN-Sm complex that contains SMN1, GEMIN2/SIP1, DDX20/GEMIN3, GEMIN4, GEMIN5, GEMIN6, GEMIN7, GEMIN8, STRAP/UNRIP and the Sm proteins SNRPB, SNRPD1, SNRPD2, SNRPD3, SNRPE, SNRPF and SNRPG. Component of an import snRNP complex composed of KPNB1, RNUT1, SMN1 and ZNF259. Interacts with DDX20, FBL, NOLA1, RNUT1, SYNCRIP and with several spliceosomal snRNP core Sm proteins, including SNRPB, SNRPD1, SNRPD2, SNRPD3, SNRPE and ILF3. Interacts with GEMIN2; the interaction is direct. Interacts with GEMIN3; the interaction is direct. Interacts with GEMIN8; the interaction is direct. Interacts with SNRPB; the interaction is direct. Interacts (via Tudor domain) with SNRPD1 (via C-terminus); the interaction is direct. Interacts with SNRPD2; the interaction is direct. Interacts (via Tudor domain) with SNRPD3 (via C-terminus); the interaction is direct. Interacts with SNRPE; the interaction is direct. Interacts with OSTF1, LSM10, LSM11 and RPP20/POP7. Interacts (via C-terminal region) with ZPR1 (via C-terminal region). Interacts (via Tudor domain) with COIL. Interacts with SETX; recruits SETX to POLR2A. Interacts with POLR2A (via the C-terminal domain (CTD)). Interacts with PRMT5. Interacts with XRN2. Interacts (via C-terminus) with FMR1 (via C-terminus); the interaction is direct and occurs in a RNA-independent manner. Interacts (via Tudor domain) with SF3B2 ('Arg-508'-methylated form). Interacts with WRAP53/TCAB1. Interacts (via Tudor domain) with ELAVL4 in an RNA-independent manner; the interaction is required for localization of ELAVL4 to RNA granules. Interacts with FRG1.

The protein localises to the nucleus. The protein resides in the gem. Its subcellular location is the cajal body. It localises to the cytoplasm. It is found in the cytoplasmic granule. The protein localises to the perikaryon. The protein resides in the cell projection. Its subcellular location is the neuron projection. It localises to the axon. It is found in the myofibril. The protein localises to the sarcomere. The protein resides in the z line. Its function is as follows. The SMN complex catalyzes the assembly of small nuclear ribonucleoproteins (snRNPs), the building blocks of the spliceosome, and thereby plays an important role in the splicing of cellular pre-mRNAs. Most spliceosomal snRNPs contain a common set of Sm proteins SNRPB, SNRPD1, SNRPD2, SNRPD3, SNRPE, SNRPF and SNRPG that assemble in a heptameric protein ring on the Sm site of the small nuclear RNA to form the core snRNP (Sm core). In the cytosol, the Sm proteins SNRPD1, SNRPD2, SNRPE, SNRPF and SNRPG are trapped in an inactive 6S pICln-Sm complex by the chaperone CLNS1A that controls the assembly of the core snRNP. To assemble core snRNPs, the SMN complex accepts the trapped 5Sm proteins from CLNS1A forming an intermediate. Binding of snRNA inside 5Sm ultimately triggers eviction of the SMN complex, thereby allowing binding of SNRPD3 and SNRPB to complete assembly of the core snRNP. Within the SMN complex, SMN1 acts as a structural backbone and together with GEMIN2 it gathers the Sm complex subunits. Ensures the correct splicing of U12 intron-containing genes that may be important for normal motor and proprioceptive neurons development. Also required for resolving RNA-DNA hybrids created by RNA polymerase II, that form R-loop in transcription terminal regions, an important step in proper transcription termination. May also play a role in the metabolism of small nucleolar ribonucleoprotein (snoRNPs). This Canis lupus familiaris (Dog) protein is Survival motor neuron protein (SMN1).